A 445-amino-acid polypeptide reads, in one-letter code: Trigger factor (445 aa).

A PPIase FKBP-type domain is found at 172-257 (GDQVVINFVG…VKSVNWAHLP (86 aa)).

This sequence belongs to the FKBP-type PPIase family. Tig subfamily.

It is found in the cytoplasm. It catalyses the reaction [protein]-peptidylproline (omega=180) = [protein]-peptidylproline (omega=0). Its function is as follows. Involved in protein export. Acts as a chaperone by maintaining the newly synthesized protein in an open conformation. Functions as a peptidyl-prolyl cis-trans isomerase. This is Trigger factor from Polynucleobacter necessarius subsp. necessarius (strain STIR1).